A 189-amino-acid chain; its full sequence is UPF0301 protein PFL_5830 (189 aa).

This sequence belongs to the UPF0301 (AlgH) family.

The sequence is that of UPF0301 protein PFL_5830 from Pseudomonas fluorescens (strain ATCC BAA-477 / NRRL B-23932 / Pf-5).